A 474-amino-acid chain; its full sequence is Glutamate--tRNA ligase (474 aa).

Positions 9 to 19 match the 'HIGH' region motif; sequence PSPTGYLHVGG. Positions 240-244 match the 'KMSKS' region motif; that stretch reads KLSKR. Lys243 serves as a coordination point for ATP.

This sequence belongs to the class-I aminoacyl-tRNA synthetase family. Glutamate--tRNA ligase type 1 subfamily. In terms of assembly, monomer.

It is found in the cytoplasm. It catalyses the reaction tRNA(Glu) + L-glutamate + ATP = L-glutamyl-tRNA(Glu) + AMP + diphosphate. Functionally, catalyzes the attachment of glutamate to tRNA(Glu) in a two-step reaction: glutamate is first activated by ATP to form Glu-AMP and then transferred to the acceptor end of tRNA(Glu). This chain is Glutamate--tRNA ligase, found in Aliivibrio fischeri (strain ATCC 700601 / ES114) (Vibrio fischeri).